A 148-amino-acid chain; its full sequence is F-box protein At3g55900 (148 aa).

The region spanning 9 to 59 (CRNLSELPQELLYKILGLLPTRNVVSTSLISHQRRSQFHWMERLKFRYPRL) is the F-box domain.

In Arabidopsis thaliana (Mouse-ear cress), this protein is F-box protein At3g55900.